A 326-amino-acid chain; its full sequence is Target of rapamycin complex subunit lst8 (326 aa).

WD repeat units lie at residues 1–37, 40–80, 83–122, 126–165, 168–207, 218–257, and 268–309; these read MNVN…CTRT, HQDS…PVIN, GVSK…LQCQ, QVNA…NEQL, EPDV…GDEV, AHKR…LMTE, and TSRG…REYS.

This sequence belongs to the WD repeat LST8 family. In terms of assembly, part of the mechanistic target of rapamycin complex 1 (mTORC1) which contains MTOR, MLST8 and RPTOR. Component of the mechanistic target of rapamycin complex 2 (mTORC2), consisting in two heterotretramers composed of MTOR, MLST8, RICTOR and MAPKAP1/SIN1.

The protein localises to the lysosome membrane. The protein resides in the cytoplasm. Functionally, subunit of both mTORC1 and mTORC2, which regulates cell growth and survival in response to nutrient and hormonal signals. mTORC1 is activated in response to growth factors or amino acids. In response to nutrients, mTORC1 is recruited to the lysosome membrane and promotes protein, lipid and nucleotide synthesis by phosphorylating several substrates, such as ribosomal protein S6 kinase (RPS6KB1 and RPS6KB2) and EIF4EBP1 (4E-BP1). In the same time, it inhibits catabolic pathways by phosphorylating the autophagy initiation components ULK1 and ATG13, as well as transcription factor TFEB, a master regulators of lysosomal biogenesis and autophagy. The mTORC1 complex is inhibited in response to starvation and amino acid depletion. Within mTORC1, MLST8 interacts directly with MTOR and enhances its kinase activity. In nutrient-poor conditions, stabilizes the MTOR-RPTOR interaction and favors RPTOR-mediated inhibition of MTOR activity. As part of the mTORC2 complex, transduces signals from growth factors to pathways involved in proliferation, cytoskeletal organization, lipogenesis and anabolic output. mTORC2 is also activated by growth factors, but seems to be nutrient-insensitive. In response to growth factors, mTORC2 phosphorylates and activates AGC protein kinase family members, including AKT (AKT1, AKT2 and AKT3), PKC (PRKCA, PRKCB and PRKCE) and SGK1. mTORC2 functions upstream of Rho GTPases to regulate the actin cytoskeleton, probably by activating one or more Rho-type guanine nucleotide exchange factors. mTORC2 promotes the serum-induced formation of stress-fibers or F-actin. Within mTORC2, MLST8 acts as a bridge between MAPKAP1/SIN1 and MTOR. This is Target of rapamycin complex subunit lst8 (mlst8) from Danio rerio (Zebrafish).